A 154-amino-acid chain; its full sequence is 6,7-dimethyl-8-ribityllumazine synthase (154 aa).

5-amino-6-(D-ribitylamino)uracil-binding positions include F22, 57-59 (AYE), and 81-83 (AVI). Position 86 to 87 (86 to 87 (GT)) interacts with (2S)-2-hydroxy-3-oxobutyl phosphate. H89 serves as the catalytic Proton donor. Residue F114 participates in 5-amino-6-(D-ribitylamino)uracil binding. (2S)-2-hydroxy-3-oxobutyl phosphate is bound at residue R128.

Belongs to the DMRL synthase family. Forms an icosahedral capsid composed of 60 subunits, arranged as a dodecamer of pentamers.

It carries out the reaction (2S)-2-hydroxy-3-oxobutyl phosphate + 5-amino-6-(D-ribitylamino)uracil = 6,7-dimethyl-8-(1-D-ribityl)lumazine + phosphate + 2 H2O + H(+). It functions in the pathway cofactor biosynthesis; riboflavin biosynthesis; riboflavin from 2-hydroxy-3-oxobutyl phosphate and 5-amino-6-(D-ribitylamino)uracil: step 1/2. Catalyzes the formation of 6,7-dimethyl-8-ribityllumazine by condensation of 5-amino-6-(D-ribitylamino)uracil with 3,4-dihydroxy-2-butanone 4-phosphate. This is the penultimate step in the biosynthesis of riboflavin. This Colwellia psychrerythraea (strain 34H / ATCC BAA-681) (Vibrio psychroerythus) protein is 6,7-dimethyl-8-ribityllumazine synthase.